We begin with the raw amino-acid sequence, 180 residues long: Ribulose bisphosphate carboxylase small subunit, chloroplastic 2 (180 aa).

The N-terminal 56 residues, 1–56, are a transit peptide targeting the chloroplast; the sequence is MASMISSSAVTTVSRASRGQSAAVAPFGGLKSMTGFPVKKVNTDITSITSNGGRVK.

The protein belongs to the RuBisCO small chain family. Heterohexadecamer of 8 large and 8 small subunits.

It is found in the plastid. It localises to the chloroplast. In terms of biological role, ruBisCO catalyzes two reactions: the carboxylation of D-ribulose 1,5-bisphosphate, the primary event in carbon dioxide fixation, as well as the oxidative fragmentation of the pentose substrate. Both reactions occur simultaneously and in competition at the same active site. Although the small subunit is not catalytic it is essential for maximal activity. The sequence is that of Ribulose bisphosphate carboxylase small subunit, chloroplastic 2 from Pisum sativum (Garden pea).